A 496-amino-acid chain; its full sequence is L-carnitine dehydrogenase/betainyl-CoA thioesterase (496 aa).

Residues 1–335 (MTTITKAACI…KRLWEKGGSP (335 aa)) are L-carnitine dehydrogenase. 11–16 (GGGVIG) provides a ligand contact to NAD(+). The segment at 336 to 496 (SKSLDASGPL…GAGRHVGQKR (161 aa)) is betainyl-CoA thioesterase.

The protein in the N-terminal section; belongs to the 3-hydroxyacyl-CoA dehydrogenase family. L-carnitine dehydrogenase subfamily. This sequence in the C-terminal section; belongs to the betainyl-CoA thioesterase family. Homodimer.

Its subcellular location is the cytoplasm. It carries out the reaction carnitine + NAD(+) = 3-dehydrocarnitine + NADH + H(+). The enzyme catalyses N,N,N-trimethylglycyl-CoA + H2O = glycine betaine + CoA + H(+). It participates in amine and polyamine metabolism; carnitine metabolism. Its function is as follows. Multifunctional enzyme that catalyzes the NAD(+)-dependent oxidation of L-carnitine to 3-dehydrocarnitine and the cleavage of betainyl-CoA (N,N,N-trimethylglycyl-CoA) into glycine betaine and coenzyme A. Can also hydrolyze L-carnitinyl-CoA, but with much lower efficiency. Is involved in a L-carnitine degradation pathway that allows R.meliloti to grow on L-carnitine as the sole source of carbon and nitrogen. The polypeptide is L-carnitine dehydrogenase/betainyl-CoA thioesterase (Rhizobium meliloti (strain 1021) (Ensifer meliloti)).